A 1209-amino-acid polypeptide reads, in one-letter code: MATTSNMFLYSLTIQPPTAVTQALLGQFSGTKEQQILTASGSRLTLLQPDPRQGKVNTLLSHDIFGIVRAIASFRLAGSHKDYIILATDSGRITIIEYLPKTNKFQRIHLETFGKSGVRRVIPGQYLAADPKGRACLISALEKNKLVYVLNRNSQAELTISSPLEAHKPGVLVLSLVALDVGYANPVFAALELDYTDADQDPTGQAREEVETQLVYYELDLGLNHVVRKWSDTVDRTSSLLFQVPGGNDGPSGVLVCGEENVTYRHSNQEAFRVPIPRRSGATEDPQRKRVIVSGVMHKLKGSAGAFFFLLQTDDGDLFKVTIDMIEDSDGNPTGEVKRLKIKYFDTIPVATSLCILKSGFLFAASEFGNHHFYQFEKLGDDDEELEFSSDDFPTDPTASYNPVYFHPRPLENLVLVESIDSMNPQVDCKVANLTGEDAPQIYSVCGNGARSTFRMLKHGLEVSEIVASELPGTPSAVWTTKLTKYDQYDAYIVLSFTNGTLVLSIGETVEEVSDSGFLTTAPTLAVQQMGEDGLIQVHPKGIRHIVQGRVNEWPAPQHRSIVAATANENQVVIALSSGEIVYFEMDSDGSLAEYDEKKEMSGTVTSLSVGQVPEGLKRSSFLAVGCDDCTVRILSLDPDSTLEMKSIQALTAAPSALSIMSMEDSFGGSTLYLHIGLHSGVYLRTVLDEVTGELTDTRQKFLGPKPTRLFQVSVQDQPCVLALSSRPWLGYTDPLTKGFMMTPLSYTELEYGWNFSSEQCLEGMVGIHANYLRIFSIEKLGDNMIQKSIPLTYTPKHLVKHPEQPYFYTIESDNNTLPPELRAKLLEQQSNGDATVLPPEDFGYPRAKGRWASCISIIDPISEEPRVLQRIDLDNNEAAVSAAIVPFASQEGESFLVVGTGKDMVLDPRQFTEGYIHVYRFHEDGRDLEFIHKTRVEEPPLALIPFQGRLLAGVGKTLRIYDLGLKQLLRKAQADVTPTLIVSLQSQGNRIIVGDLQQGITYVVYKAEGNRLIPFADDTLNRWTTCTTMVDYESVAGGDKFGNIYIVRCPERVSQETDEPGSEIHLMHARNYLHGTPNRLSLQVHFYTQDLPTSICKTSLVVGGQDVLLWSGLQGTVGVFIPFVSREDVDFFQNLENHMRAEDPPLAGRDHLIYRGYYTPVKGVIDGDLCERFSLLPNDKKQMIAGELDRSVREIERKISDIRTRSAF.

Belongs to the RSE1 family. In terms of assembly, associated with the spliceosome.

It is found in the nucleus. Functionally, involved in pre-mRNA splicing and cell cycle control. This chain is Pre-mRNA-splicing factor rse1 (msp-5), found in Neurospora crassa (strain ATCC 24698 / 74-OR23-1A / CBS 708.71 / DSM 1257 / FGSC 987).